The chain runs to 205 residues: Holliday junction branch migration complex subunit RuvA (205 aa).

The tract at residues methionine 1–valine 64 is domain I. A domain II region spans residues serine 65–isoleucine 143. Residues glycine 144–valine 153 are flexible linker. A domain III region spans residues valine 153–arginine 205.

This sequence belongs to the RuvA family. As to quaternary structure, homotetramer. Forms an RuvA(8)-RuvB(12)-Holliday junction (HJ) complex. HJ DNA is sandwiched between 2 RuvA tetramers; dsDNA enters through RuvA and exits via RuvB. An RuvB hexamer assembles on each DNA strand where it exits the tetramer. Each RuvB hexamer is contacted by two RuvA subunits (via domain III) on 2 adjacent RuvB subunits; this complex drives branch migration. In the full resolvosome a probable DNA-RuvA(4)-RuvB(12)-RuvC(2) complex forms which resolves the HJ.

The protein resides in the cytoplasm. In terms of biological role, the RuvA-RuvB-RuvC complex processes Holliday junction (HJ) DNA during genetic recombination and DNA repair, while the RuvA-RuvB complex plays an important role in the rescue of blocked DNA replication forks via replication fork reversal (RFR). RuvA specifically binds to HJ cruciform DNA, conferring on it an open structure. The RuvB hexamer acts as an ATP-dependent pump, pulling dsDNA into and through the RuvAB complex. HJ branch migration allows RuvC to scan DNA until it finds its consensus sequence, where it cleaves and resolves the cruciform DNA. In Agrobacterium fabrum (strain C58 / ATCC 33970) (Agrobacterium tumefaciens (strain C58)), this protein is Holliday junction branch migration complex subunit RuvA.